Consider the following 1318-residue polypeptide: 1-phosphatidylinositol 4,5-bisphosphate phosphodiesterase classes I and II (1318 aa).

The region spanning aspartate 318–lysine 466 is the PI-PLC X-box domain. Active-site residues include histidine 333 and histidine 378. 2 residues coordinate substrate: lysine 464 and lysine 466. Residues lysine 466–proline 481 show a composition bias toward basic residues. Disordered regions lie at residues lysine 466–alanine 489 and glutamine 505–glutamate 594. 2 stretches are compositionally biased toward low complexity: residues alanine 528–alanine 543 and lysine 554–aspartate 563. Residues leucine 571–serine 580 are compositionally biased toward polar residues. A compositionally biased stretch (basic and acidic residues) spans proline 585 to glutamate 594. One can recognise a PI-PLC Y-box domain in the interval isoleucine 599–arginine 715. The substrate site is built by serine 628 and arginine 655. One can recognise a C2 domain in the interval arginine 715–isoleucine 843. Disordered stretches follow at residues leucine 1080–serine 1112 and glycine 1296–threonine 1318. Low complexity predominate over residues glutamate 1088 to glycine 1107.

In terms of tissue distribution, expressed in neuronal cell bodies of the optic lobe, central brain, and thoracic ganglia in adults, and the brain of larvae.

It catalyses the reaction a 1,2-diacyl-sn-glycero-3-phospho-(1D-myo-inositol-4,5-bisphosphate) + H2O = 1D-myo-inositol 1,4,5-trisphosphate + a 1,2-diacyl-sn-glycerol + H(+). In terms of biological role, the production of the second messenger molecules diacylglycerol (DAG) and inositol 1,4,5-trisphosphate (IP3) is mediated by activated phosphatidylinositol-specific phospholipase C enzymes. This is 1-phosphatidylinositol 4,5-bisphosphate phosphodiesterase classes I and II (Plc21C) from Drosophila melanogaster (Fruit fly).